A 114-amino-acid chain; its full sequence is UPF0339 protein plu2779 (114 aa).

2 repeat units span residues 11–59 (TKNK…NFEI) and 62–110 (NKSG…VRDL).

It belongs to the UPF0339 family. Duplicated subfamily.

The sequence is that of UPF0339 protein plu2779 from Photorhabdus laumondii subsp. laumondii (strain DSM 15139 / CIP 105565 / TT01) (Photorhabdus luminescens subsp. laumondii).